The following is a 548-amino-acid chain: MSLQDESFPTDELFDQLNNLSSSGARNTWFAEHHKPAVFERDTAPFLEICYADPDFDADGDVANKSAKTCVSDPVGRDQEDEDDYDEDVDGDDHKLGCEKAPLGSGRSSKAVSYQDIHSAYTKRRFQHVTSKVGQYIAEIQAQDQKRRNVKFAGFQRVNSMPESLTPTLQQVYVHDGDFKVDKNCQTHSNSDSNYNSNSNNSSSSFDRLLAENESLQQKINSLRVEAKRLQGFNEYVQERLDRKTDDFVKMKCNFETLRTELSECQQKLRRQQDNSQHHFMYHIRSATSAKATQTDFLVDTIPASGNVLVTPHPLGDLTYNSSKGSIELALLSVAPSARVAQNPVQVQRAIHPQSLDFSSVSTEADGSGSGEHRVETSSRALVRRTPAPNNSETSQPSSNDSAIEVEAHEEERPSSRRQWEQQGELISPRQWGQHEGMYYFDKRNNRVIEVMGFNISQGRNQSHDTIHNQSINDSQTRLLVHSMSMSHLEAHDHFRSKRTTLGSRMLRFLGPCVRCRNGDPLNRSNVTYKDGLPAMPEEEFVDQRNQR.

Disordered stretches follow at residues Ala67–Ser109, Asn184–Phe206, and Phe358–Ser428. Acidic residues predominate over residues Gln79–Gly91. Residues Ser189–Ser205 show a composition bias toward low complexity. Phosphoserine is present on residues Ser362 and Ser368. Residues Ala388–Ser402 are compositionally biased toward polar residues. Basic and acidic residues predominate over residues Val406–Trp420. Phosphoserine occurs at positions 463, 471, 475, 483, 485, and 487.

As to quaternary structure, may be a homo- or heterodimer.

The protein localises to the nucleus. Has a role in localizing bicoid mRNA at the anterior margin of the oocyte during oogenesis, and a poorly characterized role in nuclear divisions in early embryogenesis. The sequence is that of Protein swallow (swa) from Drosophila melanogaster (Fruit fly).